Consider the following 313-residue polypeptide: Porphobilinogen deaminase (313 aa).

Cys-249 is modified (S-(dipyrrolylmethanemethyl)cysteine).

This sequence belongs to the HMBS family. Monomer. Dipyrromethane is required as a cofactor.

It carries out the reaction 4 porphobilinogen + H2O = hydroxymethylbilane + 4 NH4(+). It participates in porphyrin-containing compound metabolism; protoporphyrin-IX biosynthesis; coproporphyrinogen-III from 5-aminolevulinate: step 2/4. Its function is as follows. Tetrapolymerization of the monopyrrole PBG into the hydroxymethylbilane pre-uroporphyrinogen in several discrete steps. In Paracoccus denitrificans (strain Pd 1222), this protein is Porphobilinogen deaminase.